The following is a 197-amino-acid chain: MVRRITLNSNFMFGASDIKSLPNESAPEIAFAGRSNVGKSSLINLLINSKKAARVSSKPGCTRQINFYSMYNDKFRLVDLPGYGCSHASKDETIQYLGLVEYYLIHRRNLRRVFVLIDSKVRLKEIDKDFIYWLTYNNINFDVVLTKIDKVDRENLDAIIESTRKWINNESVSIRQISVRVKYEMTKVRDEFFKFTR.

The EngB-type G domain maps to 25-197; it reads SAPEIAFAGR…VRDEFFKFTR (173 aa). GTP contacts are provided by residues 33–40, 60–64, 79–82, 146–149, and 177–179; these read GRSNVGKS, GCTRQ, DLPG, TKID, and ISV. Mg(2+)-binding residues include serine 40 and threonine 62.

This sequence belongs to the TRAFAC class TrmE-Era-EngA-EngB-Septin-like GTPase superfamily. EngB GTPase family. It depends on Mg(2+) as a cofactor.

Its function is as follows. Necessary for normal cell division and for the maintenance of normal septation. The polypeptide is Probable GTP-binding protein EngB (Wolbachia sp. subsp. Brugia malayi (strain TRS)).